Here is a 203-residue protein sequence, read N- to C-terminus: ATP-dependent Clp protease proteolytic subunit (203 aa).

The Nucleophile role is filled by Ser107. His132 is a catalytic residue.

The protein belongs to the peptidase S14 family. As to quaternary structure, fourteen ClpP subunits assemble into 2 heptameric rings which stack back to back to give a disk-like structure with a central cavity, resembling the structure of eukaryotic proteasomes.

The protein localises to the cytoplasm. It carries out the reaction Hydrolysis of proteins to small peptides in the presence of ATP and magnesium. alpha-casein is the usual test substrate. In the absence of ATP, only oligopeptides shorter than five residues are hydrolyzed (such as succinyl-Leu-Tyr-|-NHMec, and Leu-Tyr-Leu-|-Tyr-Trp, in which cleavage of the -Tyr-|-Leu- and -Tyr-|-Trp bonds also occurs).. Its function is as follows. Cleaves peptides in various proteins in a process that requires ATP hydrolysis. Has a chymotrypsin-like activity. Plays a major role in the degradation of misfolded proteins. This is ATP-dependent Clp protease proteolytic subunit from Shewanella pealeana (strain ATCC 700345 / ANG-SQ1).